A 156-amino-acid chain; its full sequence is Cellulose synthase operon protein D (156 aa).

It functions in the pathway glycan metabolism; bacterial cellulose biosynthesis. In terms of biological role, may have a major role in the perfection of crystallization, involved either in the pore structure itself or in the organization of the pores within the linear array of terminal synthesizing complexes (TCs). The chain is Cellulose synthase operon protein D (acsD) from Komagataeibacter xylinus (Gluconacetobacter xylinus).